The chain runs to 381 residues: Protein RecA (381 aa).

Residue 79–86 coordinates ATP; sequence GPESSGKT.

It belongs to the RecA family.

Its subcellular location is the cytoplasm. Functionally, can catalyze the hydrolysis of ATP in the presence of single-stranded DNA, the ATP-dependent uptake of single-stranded DNA by duplex DNA, and the ATP-dependent hybridization of homologous single-stranded DNAs. It interacts with LexA causing its activation and leading to its autocatalytic cleavage. The protein is Protein RecA of Streptococcus parasanguinis.